Consider the following 112-residue polypeptide: DNA-binding protein Bv3F (112 aa).

The tract at residues 65-92 (KRNSKRMSTVPKYRDPATGKTWSGRGRQ) is disordered. 2 consecutive DNA-binding regions follow at residues 89-94 (RGRQPA) and 89-95 (RGRQPAW).

It belongs to the histone-like protein H-NS family. In terms of assembly, homodimer that oligomerizes on DNA into higher-order complexes that form bridges between disparate regions of DNA compacting it.

It localises to the cytoplasm. The protein localises to the nucleoid. Functionally, a DNA-binding protein implicated in transcriptional repression and chromosome organization and compaction. Binds in the minor groove of AT-rich DNA. Binds nucleation sites in AT-rich DNA and bridges them, forming higher-order nucleoprotein complexes and condensing the chromosome. As many horizontally transferred genes are AT-rich, it plays a central role in silencing foreign genes. The chain is DNA-binding protein Bv3F from Burkholderia vietnamiensis (strain G4 / LMG 22486) (Burkholderia cepacia (strain R1808)).